A 156-amino-acid polypeptide reads, in one-letter code: Small ribosomal subunit protein uS7 (156 aa).

This sequence belongs to the universal ribosomal protein uS7 family. Part of the 30S ribosomal subunit. Contacts proteins S9 and S11.

In terms of biological role, one of the primary rRNA binding proteins, it binds directly to 16S rRNA where it nucleates assembly of the head domain of the 30S subunit. Is located at the subunit interface close to the decoding center, probably blocks exit of the E-site tRNA. The sequence is that of Small ribosomal subunit protein uS7 from Burkholderia multivorans (strain ATCC 17616 / 249).